The primary structure comprises 618 residues: uncharacterized protein (618 aa).

Positions 1 to 29 are cleaved as a signal peptide; sequence MSFLVLPPEVNSALMFAGAGSGPTLAAAA. The tract at residues 598–618 is disordered; sequence SGDNSSGGFNAGNDQSGFFDG.

This sequence belongs to the mycobacterial PPE family.

This is an uncharacterized protein from Mycobacterium tuberculosis (strain ATCC 25618 / H37Rv).